The primary structure comprises 279 residues: RxLR effector protein Avh331 (279 aa).

A signal peptide spans 1–20 (MMQWSAILIRTCFSGSGGEA). A RxLR-dEER motif is present at residues 86 to 106 (RSLRSQATNVDDDANVSIENR). Asn100 carries an N-linked (GlcNAc...) asparagine glycan. Residues 129–147 (ANKLWLMADVDPKSAFKLL) are W1 motif. Residues 153–174 (GVRFIDNPKMLQWLKFTKAYLD) are Y1 motif. The tract at residues 178-208 (SGFGETSAHALLYEKIGGPDLSLLLLSLKDA) is l motif. The interval 222–240 (QFGMWHDARIEPEQLAQTV) is W2 motif. The segment at 250–271 (PKNDPKLQVIDDYAKYHRKHRK) is Y2 motif.

It belongs to the RxLR effector family.

It is found in the secreted. It localises to the host cell. In terms of biological role, effector that suppresses the host mitogen-activated protein kinase (MAPK)-based plant defense activated by the Phytophthora elicitor to promote colonization of the Phytophthora pathogen. Neither directly inhibits MAPK kinase activity nor interacts with MAPK proteins but acts downstream by suppressing transcriptional activation of resistance marker genes such as FRK1, WRKY22 and WRKY29. Confers avirulence in the presence of resistance protein Rps1k in host. This chain is RxLR effector protein Avh331, found in Phytophthora sojae (strain P6497) (Soybean stem and root rot agent).